Here is a 196-residue protein sequence, read N- to C-terminus: RNA pyrophosphohydrolase (196 aa).

Residues 6 to 149 (GYRPNVGIVI…KRDVYRKVMK (144 aa)) enclose the Nudix hydrolase domain. The Nudix box motif lies at 38–59 (GGINDNESAEQAMYRELHEEVG). The disordered stretch occupies residues 166–196 (SREANSQSNSANKKYSQTKYTKRHFYKSKGQ). A compositionally biased stretch (polar residues) spans 167–184 (REANSQSNSANKKYSQTK). Basic residues predominate over residues 185–196 (YTKRHFYKSKGQ).

The protein belongs to the Nudix hydrolase family. RppH subfamily. The cofactor is a divalent metal cation.

Accelerates the degradation of transcripts by removing pyrophosphate from the 5'-end of triphosphorylated RNA, leading to a more labile monophosphorylated state that can stimulate subsequent ribonuclease cleavage. This is RNA pyrophosphohydrolase from Haemophilus influenzae (strain 86-028NP).